We begin with the raw amino-acid sequence, 122 residues long: Large ribosomal subunit protein uL14 (122 aa).

This sequence belongs to the universal ribosomal protein uL14 family. In terms of assembly, part of the 50S ribosomal subunit. Forms a cluster with proteins L3 and L19. In the 70S ribosome, L14 and L19 interact and together make contacts with the 16S rRNA in bridges B5 and B8.

Its function is as follows. Binds to 23S rRNA. Forms part of two intersubunit bridges in the 70S ribosome. This chain is Large ribosomal subunit protein uL14, found in Saccharopolyspora erythraea (strain ATCC 11635 / DSM 40517 / JCM 4748 / NBRC 13426 / NCIMB 8594 / NRRL 2338).